The primary structure comprises 321 residues: LIMR family protein SELMODRAFT_432210 (321 aa).

5 helical membrane-spanning segments follow: residues 28–48 (KQLW…VIPF), 116–133 (CFSL…LDLW), 139–159 (LCVF…FGGV), 240–260 (LVFG…ILVF), and 284–304 (LLGT…VISG).

Belongs to the LIMR family.

The protein localises to the membrane. The polypeptide is LIMR family protein SELMODRAFT_432210 (Selaginella moellendorffii (Spikemoss)).